The following is a 124-amino-acid chain: MDTTHNDTTPQRLMITDMRPLSLETTITSLTRDIITHRFIYLINHECIVRKLDERQATFTFLVNYEMKLLHKVGSTKYKKYTEYNTKYGTFPMPIFINHDGFLECIGIKPTKHTPIIYKYDLNP.

Positions 121 to 124 (DLNP) match the DLNP; interaction with MAP1B motif.

This sequence belongs to the pneumovirus non-structural protein 2 family. As to quaternary structure, monomer (instable). Homomultimer. Heteromultimer with NS1. Interacts with host RIGI (via N-terminus); this interaction prevents host signaling pathway involved in interferon production. Interacts with host MAP1B/microtubule-associated protein 1B.

Its subcellular location is the host mitochondrion. Functionally, plays a major role in antagonizing the type I IFN-mediated antiviral response. Acts cooperatively with NS1 to repress activation and nuclear translocation of host IFN-regulatory factor IRF3. Interacts with the host cytoplasmic sensor of viral nucleic acids RIGI and prevents the interaction with its downstream partner MAVS. Together with NS2, participates in the proteasomal degradation of host STAT2, IRF3, IRF7, TBK1 and RIGI through a NS-degradasome involving CUL2 and Elongin-C. The degradasome requires an intact mitochondrial MAVS. Induces host SOCS1 expression. Induces activation of NF-kappa-B. Suppresses premature apoptosis by an NF-kappa-B-dependent, interferon-independent mechanism promoting continued viral replication. This chain is Non-structural protein 2 (1B), found in Homo sapiens (Human).